A 240-amino-acid polypeptide reads, in one-letter code: Splicing factor rtf2 (240 aa).

Disordered stretches follow at residues 1–22 (MGNDGGSLPTRNELVKEPGKVP) and 181–240 (SLNK…RVKI). The segment covering 185 to 210 (ASKKSNKNGDKKRKHVSKSNSKHAKH) has biased composition (basic residues). Composition is skewed to basic and acidic residues over residues 211 to 224 (ELRTNRMLDGENVK) and 231 to 240 (DMERVKRVKI).

This sequence belongs to the rtf2 family. As to quaternary structure, interacts with pcn1.

It localises to the nucleus. Putative splicing factor that is required for the correct splicing of a subset of pre-mRNAs. Required for the correct splicing of rtf1, a replication termination factor that mediates site-specific replication termination at replication barrier RTS1. The protein is Splicing factor rtf2 of Schizosaccharomyces pombe (strain 972 / ATCC 24843) (Fission yeast).